We begin with the raw amino-acid sequence, 275 residues long: NH(3)-dependent NAD(+) synthetase (275 aa).

46-53 contacts ATP; it reads GISGGQDS. Residue Asp-52 participates in Mg(2+) binding. Arg-140 is a deamido-NAD(+) binding site. ATP is bound at residue Thr-160. Glu-165 is a Mg(2+) binding site. Deamido-NAD(+) contacts are provided by Lys-173 and Asp-180. The ATP site is built by Lys-189 and Thr-211. Residue 260 to 261 participates in deamido-NAD(+) binding; sequence HK.

It belongs to the NAD synthetase family. In terms of assembly, homodimer.

It catalyses the reaction deamido-NAD(+) + NH4(+) + ATP = AMP + diphosphate + NAD(+) + H(+). Its pathway is cofactor biosynthesis; NAD(+) biosynthesis; NAD(+) from deamido-NAD(+) (ammonia route): step 1/1. Functionally, catalyzes the ATP-dependent amidation of deamido-NAD to form NAD. Uses ammonia as a nitrogen source. The polypeptide is NH(3)-dependent NAD(+) synthetase (Shigella boydii serotype 4 (strain Sb227)).